Here is a 343-residue protein sequence, read N- to C-terminus: MTISVAVSGASGYAGGEVLRLLAGHPDVTIGAITAHSNAGSRLGELQPHLHGLASRILEDTTVENLSGHDVVFLALPHGASADIAAQLPEGTVVIDAGADHRLEDPAAWEKFYGSAHAGTWPYGLPELPGQREKLKGANRIAVPGCYPTSALLALTPGFAGSLLQPDDVVIVAASGTSGAGKAAKVNLIGSEVMGSMSPYGVGGGHRHTPEIEQGLGNAAGEAVTVSFTPTLAPMSRGILTTATAKVKPGVTAAELRSAWEEAYDDEPFVHLLPEGQWPSTKSVQGSNHAVMQVAFDAHTGRVIVTCAIDNLTKGTAGGAVQSMNIALGLAETAGLNLQGVAP.

Residue cysteine 146 is part of the active site.

Belongs to the NAGSA dehydrogenase family. Type 1 subfamily.

Its subcellular location is the cytoplasm. It catalyses the reaction N-acetyl-L-glutamate 5-semialdehyde + phosphate + NADP(+) = N-acetyl-L-glutamyl 5-phosphate + NADPH + H(+). It participates in amino-acid biosynthesis; L-arginine biosynthesis; N(2)-acetyl-L-ornithine from L-glutamate: step 3/4. Catalyzes the NADPH-dependent reduction of N-acetyl-5-glutamyl phosphate to yield N-acetyl-L-glutamate 5-semialdehyde. This Arthrobacter sp. (strain FB24) protein is N-acetyl-gamma-glutamyl-phosphate reductase.